A 126-amino-acid polypeptide reads, in one-letter code: Profilin-1 (126 aa).

The protein belongs to the profilin family. Occurs in many kinds of cells as a complex with monomeric actin in a 1:1 ratio.

The protein localises to the cytoplasm. It is found in the cytoskeleton. In terms of biological role, binds to actin and affects the structure of the cytoskeleton. At high concentrations, profilin prevents the polymerization of actin, whereas it enhances it at low concentrations. By binding to PIP2, it inhibits the formation of IP3 and DG. The protein is Profilin-1 (proA) of Dictyostelium discoideum (Social amoeba).